The primary structure comprises 737 residues: Alpha-adducin (737 aa).

Residue Met1 is modified to N-acetylmethionine. The segment at 1-21 (MNGDSRAAVVTSPPPTTAPHK) is disordered. A Phosphoserine modification is found at Ser12. Ser59 bears the Phosphoserine; by PKA mark. Ser64 bears the Phosphoserine mark. Thr331 carries the post-translational modification Phosphothreonine. Ser334, Ser353, Ser355, Ser358, and Ser366 each carry phosphoserine. Residue Ser408 is modified to Phosphoserine; by PKA. 2 disordered regions span residues 421–486 (FASD…SAVP) and 576–737 (RREV…KSDS). A Phosphoserine modification is found at Ser427. Thr429 bears the Phosphothreonine mark. Phosphoserine is present on Ser431. Ser436 is modified (phosphoserine; by PKA). The residue at position 445 (Thr445) is a Phosphothreonine; by ROCK2. 2 positions are modified to phosphoserine: Ser464 and Ser465. Phosphothreonine; by ROCK2 is present on Thr480. Ser481 carries the phosphoserine; by PKA modification. Residues 576-601 (RREVERKQKGSEENLDEAREQKEKSP) are compositionally biased toward basic and acidic residues. A phosphoserine mark is found at Ser586, Ser600, and Ser613. Residues 602–614 (PDQPAVPHPPPST) show a composition bias toward pro residues. Residue Thr614 is modified to Phosphothreonine. 4 positions are modified to phosphoserine: Ser678, Ser707, Ser710, and Ser714. Low complexity predominate over residues 687–714 (PVAEEAAPSAVEEGAAADPGSDGSPGKS). The segment covering 715–737 (PSKKKKKFRTPSFLKKSKKKSDS) has biased composition (basic residues). Ser716 bears the Phosphoserine; by PKC mark. The interval 717–734 (KKKKKFRTPSFLKKSKKK) is interaction with calmodulin. Ser726 bears the Phosphoserine; by PKA and PKC mark.

Belongs to the aldolase class II family. Adducin subfamily. Heterodimer of an alpha and a beta subunit or an alpha and a gamma subunit. Expressed in all tissues. Found in much higher levels in reticulocytes than the beta subunit.

Its subcellular location is the cytoplasm. It is found in the cytoskeleton. The protein resides in the cell membrane. Functionally, membrane-cytoskeleton-associated protein that promotes the assembly of the spectrin-actin network. Binds to calmodulin. This chain is Alpha-adducin (ADD1), found in Homo sapiens (Human).